We begin with the raw amino-acid sequence, 217 residues long: Cytidylate kinase (217 aa).

Residue 10 to 18 coordinates ATP; that stretch reads GPAGAGKST.

It belongs to the cytidylate kinase family. Type 1 subfamily.

It localises to the cytoplasm. The enzyme catalyses CMP + ATP = CDP + ADP. It carries out the reaction dCMP + ATP = dCDP + ADP. The polypeptide is Cytidylate kinase (Alkaliphilus oremlandii (strain OhILAs) (Clostridium oremlandii (strain OhILAs))).